The sequence spans 593 residues: Metal-response element-binding transcription factor 2 (593 aa).

A disordered region spans residues 1 to 35; that stretch reads MRDSTGAGNSLVHKRSPLRRNQKTPTSLTKLSLQD. Residues 12–22 show a composition bias toward basic residues; that stretch reads VHKRSPLRRNQ. Over residues 23-32 the composition is skewed to polar residues; sequence KTPTSLTKLS. Thr24 is subject to Phosphothreonine. Positions 44–101 constitute a Tudor domain; sequence CKFEEGQDVLARWSDGLFYLGTIKKINILKQSCFIIFEDSSKSWVLWKDIQTGATGSG. 2 consecutive PHD-type zinc fingers follow at residues 102–157 and 201–255; these read EMVC…CVFA and QCYC…CSSG. Residue Lys360 forms a Glycyl lysine isopeptide (Lys-Gly) (interchain with G-Cter in SUMO2) linkage. A compositionally biased stretch (basic and acidic residues) spans 360–374; sequence KAEKEPEGTSHEFKI. Disordered stretches follow at residues 360-411 and 424-486; these read KAEK…PYTR and KESI…TRTG. The span at 445-454 shows a compositional bias: polar residues; the sequence is TAHSSNTSDV. Ser452 bears the Phosphoserine mark. A compositionally biased stretch (low complexity) spans 459–471; it reads ASSAKETTSSSIS. A Glycyl lysine isopeptide (Lys-Gly) (interchain with G-Cter in SUMO2) cross-link involves residue Lys522.

It belongs to the Polycomblike family. As to quaternary structure, associates with the PRC2 complex, which consists of the core components EED, EZH1 or EZH2, SUZ12, and RBBP4, and various combinations of accessory subunits including AEBP2, JARID2, PHF19, MTF2 and EPOP. Forms a dimeric PRC2.1 (class 1, PRC-PCL) complex consisting of at least SUZ12, RBBP4, and PHF19 or MTF2; PHF19 and MTF2 stabilize the dimeric structure which enhances PRC2 interaction with chromatin.

It is found in the nucleus. Polycomb group (PcG) protein that specifically binds histone H3 trimethylated at 'Lys-36' (H3K36me3) and recruits the PRC2 complex, thus enhancing PRC2 H3K27me3 methylation activity. Regulates the transcriptional networks during embryonic stem cell self-renewal and differentiation. Promotes recruitment of the PRC2 complex to the inactive X chromosome in differentiating XX ES cells and PRC2 recruitment to target genes in undifferentiated ES cells. Required to repress Hox genes by enhancing H3K27me3 methylation of the PRC2 complex. In some conditions may act as an inhibitor of PRC2 activity: able to activate the CDKN2A gene and promote cellular senescence by suppressing the catalytic activity of the PRC2 complex locally. Binds to the metal-regulating-element (MRE) of MT1A gene promoter. This Homo sapiens (Human) protein is Metal-response element-binding transcription factor 2 (MTF2).